A 500-amino-acid polypeptide reads, in one-letter code: Probable cytosol aminopeptidase (500 aa).

Mn(2+)-binding residues include lysine 261 and aspartate 266. The active site involves lysine 273. Mn(2+)-binding residues include aspartate 284, aspartate 343, and glutamate 345. The active site involves arginine 347.

This sequence belongs to the peptidase M17 family. Mn(2+) is required as a cofactor.

The protein localises to the cytoplasm. The enzyme catalyses Release of an N-terminal amino acid, Xaa-|-Yaa-, in which Xaa is preferably Leu, but may be other amino acids including Pro although not Arg or Lys, and Yaa may be Pro. Amino acid amides and methyl esters are also readily hydrolyzed, but rates on arylamides are exceedingly low.. It catalyses the reaction Release of an N-terminal amino acid, preferentially leucine, but not glutamic or aspartic acids.. Presumably involved in the processing and regular turnover of intracellular proteins. Catalyzes the removal of unsubstituted N-terminal amino acids from various peptides. This Wolbachia pipientis wMel protein is Probable cytosol aminopeptidase.